The following is a 178-amino-acid chain: Interleukin-10 (178 aa).

The signal sequence occupies residues 1-18 (MHSSALLCCLVLLTGVRA). 2 disulfides stabilise this stretch: Cys-30/Cys-126 and Cys-80/Cys-132. N-linked (GlcNAc...) asparagine glycosylation is present at Asn-134.

It belongs to the IL-10 family. Homodimer. Interacts with IL10RA and IL10RB.

Its subcellular location is the secreted. Functionally, major immune regulatory cytokine that acts on many cells of the immune system where it has profound anti-inflammatory functions, limiting excessive tissue disruption caused by inflammation. Mechanistically, IL10 binds to its heterotetrameric receptor comprising IL10RA and IL10RB leading to JAK1 and STAT2-mediated phosphorylation of STAT3. In turn, STAT3 translocates to the nucleus where it drives expression of anti-inflammatory mediators. Targets antigen-presenting cells (APCs) such as macrophages and monocytes and inhibits their release of pro-inflammatory cytokines including granulocyte-macrophage colony-stimulating factor /GM-CSF, granulocyte colony-stimulating factor/G-CSF, IL-1 alpha, IL-1 beta, IL-6, IL-8 and TNF-alpha. Also interferes with antigen presentation by reducing the expression of MHC-class II and co-stimulatory molecules, thereby inhibiting their ability to induce T cell activation. In addition, controls the inflammatory response of macrophages by reprogramming essential metabolic pathways including mTOR signaling. This is Interleukin-10 (IL10) from Macaca nemestrina (Pig-tailed macaque).